We begin with the raw amino-acid sequence, 152 residues long: Putative NrdI-like protein (152 aa).

It belongs to the NrdI family.

The sequence is that of Putative NrdI-like protein from Streptococcus pyogenes serotype M18 (strain MGAS8232).